Here is a 96-residue protein sequence, read N- to C-terminus: Large ribosomal subunit protein bL25 (96 aa).

Belongs to the bacterial ribosomal protein bL25 family. In terms of assembly, part of the 50S ribosomal subunit; part of the 5S rRNA/L5/L18/L25 subcomplex. Contacts the 5S rRNA. Binds to the 5S rRNA independently of L5 and L18.

Its function is as follows. This is one of the proteins that binds to the 5S RNA in the ribosome where it forms part of the central protuberance. The protein is Large ribosomal subunit protein bL25 of Buchnera aphidicola subsp. Schizaphis graminum (strain Sg).